The chain runs to 72 residues: Dermaseptin-A4 (72 aa).

A signal peptide spans methionine 1–cysteine 22. The propeptide occupies glutamate 23 to glutamate 41. The disordered stretch occupies residues glutamate 24–arginine 43. Positions glutamate 30 to serine 39 are enriched in acidic residues. The residue at position 69 (alanine 69) is an Alanine amide. Positions glutamate 71–glutamine 72 are excised as a propeptide.

Belongs to the frog skin active peptide (FSAP) family. Dermaseptin subfamily. As to expression, expressed by the skin glands.

Its subcellular location is the secreted. Possesses a potent antimicrobial activity against Gram-positive and Gram-negative bacteria. Probably acts by disturbing membrane functions with its amphipathic structure. The polypeptide is Dermaseptin-A4 (Agalychnis annae (Blue-sided leaf frog)).